The sequence spans 231 residues: Modulator of macroautophagy TMEM150B-B (231 aa).

Residue methionine 1 is a topological domain, cytoplasmic. The helical transmembrane segment at 2–22 (WAWALLPICLTVWATGGIWIV) threads the bilayer. Topologically, residues 23–50 (YAMSVSNGSVNLSDGFPYISVSGTYPPQ) are extracellular. N-linked (GlcNAc...) asparagine glycans are attached at residues asparagine 29 and asparagine 33. Residues 51–71 (SCVFGQVLNVGAMLAVWISVI) form a helical membrane-spanning segment. At 72–83 (RFQQIRDYNCHS) the chain is on the cytoplasmic side. The chain crosses the membrane as a helical span at residues 84–104 (VLNSVSLATGILCALGTSIVG). The Extracellular portion of the chain corresponds to 105–115 (NFQQSNQLQTH). Residues 116–136 (LAGAFLAFIIGNVYFWMQTAL) traverse the membrane as a helical segment. The Cytoplasmic segment spans residues 137–150 (TYMVKPKHGGCYIG). Residues 151-171 (PIRFCLSIACTALIVAMAVFL) form a helical membrane-spanning segment. Residues 172–183 (KMNMKSVSAICE) are Extracellular-facing. Residues 184–204 (WIVAMILFLLYGLFAVDFWHL) traverse the membrane as a helical segment. The Cytoplasmic portion of the chain corresponds to 205–231 (DGHFFHVKKRRTVIPNEMEVSTVTLSI).

This sequence belongs to the DRAM/TMEM150 family.

It is found in the cell membrane. It localises to the endosome membrane. The protein resides in the cytoplasmic vesicle. Its subcellular location is the autophagosome membrane. In terms of biological role, modulator of macroautophagy that causes accumulation of autophagosomes under basal conditions and enhances autophagic flux. Represses cell death and promotes long-term clonogenic survival of cells grown in the absence of glucose in a macroautophagy-independent manner. May have some role in extracellular matrix engulfment or growth factor receptor recycling, both of which can modulate cell survival. This Xenopus laevis (African clawed frog) protein is Modulator of macroautophagy TMEM150B-B.